Here is a 1958-residue protein sequence, read N- to C-terminus: Sodium channel protein type 10 subunit alpha (1958 aa).

Topologically, residues 1–125 are cytoplasmic; the sequence is MEFPFGSVGT…FNLIRRTAIK (125 aa). Residues 27–54 form a disordered region; that stretch reads QIAAHRAAKKGRPKQRGQKDKSEKPRPQ. The segment covering 32–42 has biased composition (basic residues); it reads RAAKKGRPKQR. Positions 43–54 are enriched in basic and acidic residues; sequence GQKDKSEKPRPQ. The I repeat unit spans residues 116-404; that stretch reads FNLIRRTAIK…VTMAYEEQSQ (289 aa). Residues 126-149 traverse the membrane as a helical segment; it reads VSVHSWFSIFITVTILVNCVCMTR. Residues 150-154 lie on the Extracellular side of the membrane; it reads TDLPE. Residues 155 to 174 form a helical membrane-spanning segment; that stretch reads KLEYAFTVVYTFEALIKILA. Residues 175-187 are Cytoplasmic-facing; that stretch reads RGFCLNEFTYLRD. A helical transmembrane segment spans residues 188–206; it reads PWNWLDFSVITLAYVGAAI. The Extracellular segment spans residues 207–212; that stretch reads DLRGIS. Residues 213–232 traverse the membrane as a helical; Voltage-sensor segment; it reads GLRTFRVLRALKTVSVIPGL. Residues 233-248 lie on the Cytoplasmic side of the membrane; that stretch reads KVIVGALIHSVRKLAD. A helical membrane pass occupies residues 249 to 272; sequence VTILTVFCLSVFALVGLQLFKGNL. Residues 273–340 lie on the Extracellular side of the membrane; sequence KNKCIKNGTD…PDFNYTSFDS (68 aa). The cysteines at positions 276 and 318 are disulfide-linked. Residues N279, N288, N311, and N334 are each glycosylated (N-linked (GlcNAc...) asparagine). An intramembrane region (pore-forming) is located at residues 341-365; the sequence is FAWAFLSLFRLMTQDSWERLYQQTL. The Extracellular portion of the chain corresponds to 366 to 372; that stretch reads RASGKMY. Residues 373–398 form a helical membrane-spanning segment; it reads MVFFVLVIFLGSFYLVNLILAVVTMA. Residues 399-658 are Cytoplasmic-facing; the sequence is YEEQSQATIA…KWKKFKMVLF (260 aa). Phosphoserine occurs at positions 440, 443, 466, and 478. Disordered stretches follow at residues 444 to 483 and 539 to 583; these read HNGSPLAPKNANERRPRVKSRMSEGSTDDNRSLQSDPYNQ and GRGA…APEG. Over residues 549 to 560 the composition is skewed to pro residues; the sequence is PRSPLPQSPNPG. S611 and S614 each carry phosphoserine. Residues 646-910 form an II repeat; that stretch reads CCPKWKKFKM…EDDGEVNNLQ (265 aa). The chain crosses the membrane as a helical span at residues 659–683; it reads ELVTDPFAELTITLCIVVNTVFMAM. Residues 684–694 are Extracellular-facing; it reads EHYPMTDAFDA. A helical transmembrane segment spans residues 695 to 718; it reads MLQAGNIVFTVFFTMEMAFKIIAF. Topologically, residues 719–726 are cytoplasmic; it reads DPYYYFQK. A helical transmembrane segment spans residues 727-746; sequence KWNIFDCVIVTVSLLELSTS. Topologically, residues 747–752 are extracellular; sequence KKGSLS. Residues 753–772 form a helical; Voltage-sensor membrane-spanning segment; it reads VLRTFRLLRVFKLAKSWPTL. Residues 773-788 lie on the Cytoplasmic side of the membrane; the sequence is NMLIKIIGNSVGALGN. A helical transmembrane segment spans residues 789–809; it reads LTFILAIIVFIFALVGKQLLS. Over 810–833 the chain is Extracellular; sequence ENYGCRRDGISVWNGERLRWHMCD. The segment at residues 834 to 854 is an intramembrane region (pore-forming); that stretch reads FFHSFLVVFRILCGEWIENMW. Topologically, residues 855-863 are extracellular; the sequence is VCMEVSQDY. An intrachain disulfide couples C856 to C865. A helical membrane pass occupies residues 864-889; the sequence is ICLTLFLTVMVLGNLVVLNLFIALLL. Topologically, residues 890-1148 are cytoplasmic; it reads NSFSADNLTA…GWQVRKTCYR (259 aa). The disordered stretch occupies residues 1006–1094; the sequence is DLDELEEDVE…SEGSTVDCPD (89 aa). Polar residues predominate over residues 1017-1038; that stretch reads ASQSSWQEESPKGQQELLQQVQ. An III repeat occupies 1141–1450; it reads QVRKTCYRIV…KKYYNAMKKL (310 aa). The helical transmembrane segment at 1149–1172 threads the bilayer; that stretch reads IVEHSWFESFIIFMILLSSGALAF. At 1173–1185 the chain is on the extracellular side; it reads EDNYLEEKPRVKS. Residues 1186-1211 traverse the membrane as a helical segment; it reads VLEYTDRVFTFIFVFEMLLKWVAYGF. Over 1212–1217 the chain is Cytoplasmic; sequence KKYFTN. Residues 1218-1239 traverse the membrane as a helical segment; that stretch reads AWCWLDFLIVNISLTSLIAKIL. The Extracellular portion of the chain corresponds to 1240–1243; that stretch reads EYSD. A helical; Voltage-sensor membrane pass occupies residues 1244–1265; sequence VASIKALRTLRALRPLRALSRF. At 1266–1284 the chain is on the cytoplasmic side; the sequence is EGMRVVVDALVGAIPSIMN. The helical transmembrane segment at 1285-1312 threads the bilayer; sequence VLLVCLIFWLIFSIMGVNLFAGKFSRCV. Residues 1313 to 1354 are Extracellular-facing; the sequence is DTRSNPFSVVNSTFVTNKSDCYNQNNTGHFFWVNVKVNFDNV. N-linked (GlcNAc...) asparagine glycosylation is found at N1323, N1329, and N1337. Residues 1355 to 1376 constitute an intramembrane region (pore-forming); it reads AMGYLALLQVATFKGWMDIMYA. The Extracellular portion of the chain corresponds to 1377 to 1392; the sequence is AVDSRDINSQPNWEES. Residues 1393-1419 traverse the membrane as a helical segment; that stretch reads LYMYLYFVVFIIFGGFFTLNLFVGVII. Over 1420 to 1472 the chain is Cytoplasmic; sequence DNFNQQKKKLGGQDIFMTEEQKKYYNAMKKLGSKKPQKPIPRPLNKYQGFVFD. At S1452 the chain carries Phosphoserine; by PKC. The IV repeat unit spans residues 1459-1758; the sequence is IPRPLNKYQG…WEKFDPEATQ (300 aa). Residues 1473 to 1496 traverse the membrane as a helical segment; it reads IVTRQAFDIIIMALICLNMITMMV. At 1497 to 1507 the chain is on the extracellular side; the sequence is ETDNQSEEKTK. N-linked (GlcNAc...) asparagine glycosylation is present at N1500. A helical transmembrane segment spans residues 1508–1531; that stretch reads VLGRINQFFVAVFTGECVMKMFAL. Over 1532–1537 the chain is Cytoplasmic; the sequence is RQYYFT. Residues 1538 to 1561 traverse the membrane as a helical segment; sequence NGWNVFDFIVVILSISSLLFSAIL. Residues 1562–1573 are Extracellular-facing; that stretch reads SSLESYFSPTLL. A helical; Voltage-sensor transmembrane segment spans residues 1574-1595; the sequence is RVIRLARIGRILRLIRAAKGIR. The Cytoplasmic segment spans residues 1596–1610; it reads TLLFALMMSLPALFN. Residues 1611–1633 form a helical membrane-spanning segment; that stretch reads IGLLLFLVMFIYSIFGMASFANV. Over 1634–1647 the chain is Extracellular; sequence IDEAGIDDMFNFKT. The pore-forming intramembrane region spans 1648–1670; sequence FGNSMLCLFQITTSAGWDGLLSP. The Extracellular portion of the chain corresponds to 1671 to 1698; sequence ILNTGPPYCDPNRPNSNGSKGNCGSPAV. N1687 carries N-linked (GlcNAc...) asparagine glycosylation. Residues 1699–1723 form a helical membrane-spanning segment; the sequence is GILFFTTYIIISFLIVVNMYIAVIL. The Cytoplasmic segment spans residues 1724-1958; that stretch reads ENFNVATEES…AKEGKSPGPQ (235 aa). An IQ domain is found at 1852 to 1881; that stretch reads EDISATIIQKAYRNYMLQRSLMLSNPLHVP. Residues 1901 to 1958 form a disordered region; that stretch reads NDNGGLPDKSETASATSFPPSYDSVTRGLSDRANISTSSSMQNEDEVTAKEGKSPGPQ. Over residues 1933–1942 the composition is skewed to polar residues; that stretch reads ANISTSSSMQ. Over residues 1947–1958 the composition is skewed to basic and acidic residues; that stretch reads VTAKEGKSPGPQ.

Belongs to the sodium channel (TC 1.A.1.10) family. Nav1.8/SCN10A subfamily. The channel consists of an ion conducting pore forming alpha-subunit regulated by one or more associated auxiliary subunits SCN1B, SCN2B and SCN3B; electrophysiological properties may vary depending on the type of the associated beta subunits. Found in a number of complexes with PRX, DYNLT1 and PDZD2. Interacts with proteins such as FSTL1, PRX, DYNLT1, PDZD2, S100A10 and many others. Interacts with NEDD4 and NEDD4L. In terms of processing, ubiquitinated by NEDD4L; which promotes its endocytosis. Post-translationally, phosphorylation at Ser-1452 by PKC in a highly conserved cytoplasmic loop slows inactivation of the sodium channel and reduces peak sodium currents. Lacks the cysteine which covalently binds the conotoxin GVIIJ. This cysteine (position 815) is speculated in other sodium channel subunits alpha to be implied in covalent binding with the sodium channel subunit beta-2 or beta-4. In terms of tissue distribution, expressed in dorsal root ganglion and trigeminal ganglion.

It localises to the cell membrane. The enzyme catalyses Na(+)(in) = Na(+)(out). Functionally, tetrodotoxin-resistant channel that mediates the voltage-dependent sodium ion permeability of excitable membranes. Assuming opened or closed conformations in response to the voltage difference across the membrane, the protein forms a sodium-selective channel through which sodium ions may pass in accordance with their electrochemical gradient. Plays a role in neuropathic pain mechanisms. This is Sodium channel protein type 10 subunit alpha from Mus musculus (Mouse).